The primary structure comprises 709 residues: Solute carrier organic anion transporter family member 2B1 (709 aa).

The interval 1 to 38 (MGPRIGPAGEVPQVPDKETKATMGTENTPGGKASPDPQ) is disordered. At 1-49 (MGPRIGPAGEVPQVPDKETKATMGTENTPGGKASPDPQDVRPSVFHNIK) the chain is on the cytoplasmic side. S34 carries the phosphoserine modification. A helical transmembrane segment spans residues 50-69 (LFVLCHSLLQLAQLMISGYL). The tract at residues 51–69 (FVLCHSLLQLAQLMISGYL) is required for E1S and taurocholate transport; required for transporter stability. Residues 70-88 (KSSISTVEKRFGLSSQTSG) lie on the Extracellular side of the membrane. Residues 89–109 (LLASFNEVGNTALIVFVSYFG) form a helical membrane-spanning segment. Topologically, residues 110-115 (SRVHRP) are cytoplasmic. A helical membrane pass occupies residues 116–140 (RMIGYGAILVALAGLLMTLPHFISE). The Extracellular segment spans residues 141-185 (PYRYDNTSPEDMPQDFKASLCLPTTSAPASAPSNGNCSSYTETQH). An N-linked (GlcNAc...) asparagine glycan is attached at N176. The helical transmembrane segment at 186–215 (LSVVGIMFVAQTLLGVGGVPIQPFGISYID) threads the bilayer. Over 216–234 (DFAHNSNSPLYLGILFAVT) the chain is Cytoplasmic. A helical transmembrane segment spans residues 235–255 (MMGPGLAFGLGSLMLRLYVDI). Residues 256 to 273 (NQMPEGGISLTIKDPRWV) lie on the Extracellular side of the membrane. Residues 274 to 298 (GAWWLGFLIAAGAVALAAIPYFFFP) traverse the membrane as a helical segment. Residues 299 to 366 (KEMPKEKREL…IKVFPRVLLQ (68 aa)) lie on the Cytoplasmic side of the membrane. Residue T318 is modified to Phosphothreonine. The interval 319–342 (DSPARKGKDSPSKQSPGESTKKQD) is disordered. Position 320 is a phosphoserine (S320). A helical transmembrane segment spans residues 367-388 (TLRHPIFLLVVLSQVCLSSMAA). Residues 389–408 (GMATFLPKFLERQFSITASY) are Extracellular-facing. The helical transmembrane segment at 409–432 (ANLLIGCLSFPSVIVGIVVGGVLV) threads the bilayer. At 433-436 (KRLH) the chain is on the cytoplasmic side. A helical membrane pass occupies residues 437-460 (LGPVGCGALCLLGMLLCLFFSLPL). At 461–564 (FFIGCSSHQI…STCSHLVVPF (104 aa)) the chain is on the extracellular side. The Kazal-like domain occupies 483-543 (LELSPSCMEA…VFYTNCSCVV (61 aa)). 3 disulfide bridges follow: C489/C520, C495/C516, and C504/C541. The N-linked (GlcNAc...) asparagine glycan is linked to N538. The helical transmembrane segment at 565 to 587 (LLLVSLGSALACLTHTPSFMLIL) threads the bilayer. Residues 588–596 (RGVKKEDKT) lie on the Cytoplasmic side of the membrane. The chain crosses the membrane as a helical span at residues 597-622 (LAVGIQFMFLRILAWMPSPVIHGSAI). Residues 623–655 (DTTCVHWALSCGRRAVCRYYNNDLLRNRFIGLQ) are Extracellular-facing. Residues 656-673 (FFFKTGSVICFALVLAVL) traverse the membrane as a helical segment. The Cytoplasmic segment spans residues 674–709 (RQQDKEARTKESRSSPAVEQQLLVSGPGKKPEDSRV). Residues 679 to 709 (EARTKESRSSPAVEQQLLVSGPGKKPEDSRV) are disordered.

This sequence belongs to the organo anion transporter (TC 2.A.60) family. Strongly expressed in the liver, at the sinusoidal membrane of the hepatocytes. Expressed in the kidney. Expressed in placental trophoblasts and syncytiotrophoblast. Expressed in the small intestine. Expressed in the blood-brain barrier, in endothelial cells of brain capillaries. Expressed in the retina, in the inner nuclear layer and the inner plexiform layer. Expressed in skelettal muscles. In testis, primarily localized to the basal membrane of Sertoli cells and weakly expressed within the tubules. Also expressed in pancreas, lung, heart, colon, ovary and spleen. Expressed in fetal brain, heart, kidney, liver, lung, skeletal muscle, spleen and pancreas. As to expression, highest expression in brain. Predominant isoform compared to isoform 3 in small intestine duodenum, kidney, placenta, and skeletal muscle. In terms of tissue distribution, predominant isoform compared to isoform 1 in liver. Also expressed in small intestine duodenum, kidney, brain, placenta, and skeletal muscle.

The protein localises to the cell membrane. Its subcellular location is the basal cell membrane. The protein resides in the basolateral cell membrane. It is found in the apical cell membrane. The enzyme catalyses dehydroepiandrosterone 3-sulfate(out) = dehydroepiandrosterone 3-sulfate(in). It carries out the reaction estrone 3-sulfate(out) = estrone 3-sulfate(in). The catalysed reaction is estrone 3-sulfate(out) + hydrogencarbonate(in) = estrone 3-sulfate(in) + hydrogencarbonate(out). It catalyses the reaction taurocholate(out) = taurocholate(in). The enzyme catalyses coproporphyrin III(out) = coproporphyrin III(in). It carries out the reaction substance P(out) = substance P(in). The catalysed reaction is pregnenolone sulfate(out) = pregnenolone sulfate(in). It catalyses the reaction prostaglandin E2(out) = prostaglandin E2(in). The enzyme catalyses prostaglandin D2(out) = prostaglandin D2(in). It carries out the reaction L-thyroxine(out) = L-thyroxine(in). E1S, DHEA-S and PregS transports are regulated by steroid hormones. In the case of testosterone, transport of E1S and DHEA-S was inhibited, whereas progesterone stimulated E1S, DHEA-S and PregS uptake. Progesterone stimulates high-affinity uptake of E1S whereas it inhibits low-affinity uptake of E1S. Progesterone doesn't affect the uptake of PGE2. In terms of biological role, mediates the Na(+)-independent transport of steroid sulfate conjugates and other specific organic anions. Responsible for the transport of estrone 3-sulfate (E1S) through the basal membrane of syncytiotrophoblast, highlighting a potential role in the placental absorption of fetal-derived sulfated steroids including the steroid hormone precursor dehydroepiandrosterone sulfate (DHEA-S). Also facilitates the uptake of sulfated steroids at the basal/sinusoidal membrane of hepatocytes, therefore accounting for the major part of organic anions clearance of liver. Mediates the intestinal uptake of sulfated steroids. Mediates the uptake of the neurosteroids DHEA-S and pregnenolone sulfate (PregS) into the endothelial cells of the blood-brain barrier as the first step to enter the brain. Also plays a role in the reuptake of neuropeptides such as substance P/TAC1 and vasoactive intestinal peptide/VIP released from retinal neurons. May act as a heme transporter that promotes cellular iron availability via heme oxygenase/HMOX2 and independently of TFRC. Also transports heme by-product coproporphyrin III (CPIII), and may be involved in their hepatic disposition. Mediates the uptake of other substrates such as prostaglandins D2 (PGD2), E1 (PGE1) and E2 (PGE2), taurocholate, L-thyroxine, leukotriene C4 and thromboxane B2. May contribute to regulate the transport of organic compounds in testis across the blood-testis-barrier. Shows a pH-sensitive substrate specificity which may be ascribed to the protonation state of the binding site and leads to a stimulation of substrate transport in an acidic microenvironment. The exact transport mechanism has not been yet deciphered but most likely involves an anion exchange, coupling the cellular uptake of organic substrate with the efflux of an anionic compound. Hydrogencarbonate/HCO3(-) acts as a probable counteranion that exchanges for organic anions. Cytoplasmic glutamate may also act as counteranion in the placenta. An inwardly directed proton gradient has also been proposed as the driving force of E1S uptake with a (H(+):E1S) stoichiometry of (1:1). Its function is as follows. Has estrone 3-sulfate (E1S) transport activity comparable with the full-length isoform 1. In Homo sapiens (Human), this protein is Solute carrier organic anion transporter family member 2B1.